The primary structure comprises 358 residues: Isopentenyl-diphosphate delta-isomerase (358 aa).

12–13 is a binding site for substrate; it reads RK. FMN-binding positions include 69-71, Ser-99, and Asn-128; that span reads AMT. Position 158 (Gln-158) interacts with substrate. Residue Glu-159 coordinates Mg(2+). Residues Lys-190, Thr-220, 267–269, and 288–289 each bind FMN; these read GIR and AG.

It belongs to the IPP isomerase type 2 family. Homooctamer. Dimer of tetramers. It depends on FMN as a cofactor. NADPH serves as cofactor. The cofactor is Mg(2+).

The protein localises to the cytoplasm. It catalyses the reaction isopentenyl diphosphate = dimethylallyl diphosphate. Functionally, involved in the biosynthesis of isoprenoids. Catalyzes the 1,3-allylic rearrangement of the homoallylic substrate isopentenyl (IPP) to its allylic isomer, dimethylallyl diphosphate (DMAPP). The chain is Isopentenyl-diphosphate delta-isomerase from Listeria monocytogenes serotype 4b (strain CLIP80459).